Reading from the N-terminus, the 355-residue chain is Chromatin modification-related protein EAF3 (355 aa).

The Tudor-knot domain occupies 3 to 77; the sequence is EVGGKCLAYH…WDEWVSVDRI (75 aa). A disordered region spans residues 98–150; the sequence is ASLAQQQKTKNGGSAKRGGGGAHSESNHGGRRSGSGDRRDSNAEERGIVPSEG. Over residues 131 to 144 the composition is skewed to basic and acidic residues; sequence GSGDRRDSNAEERG. An MRG domain is found at 163 to 353; sequence SRNKLRIHIP…TSSQYEGVAL (191 aa).

This sequence belongs to the MRG family. Component of the NuA4 histone acetyltransferase complex.

It is found in the nucleus. Its function is as follows. Involved in deacetylation of histones, chromatin assembly and chromosome segregation. May act as a transcriptional oscillator, directing histone deacetylases to specific chromosomal domains. Component of the NuA4 histone acetyltransferase complex which is involved in transcriptional activation of selected genes principally by acetylation of nucleosomal histone H4 and H2A. The NuA4 complex is also involved in DNA repair. The protein is Chromatin modification-related protein EAF3 (EAF3) of Candida glabrata (strain ATCC 2001 / BCRC 20586 / JCM 3761 / NBRC 0622 / NRRL Y-65 / CBS 138) (Yeast).